The following is a 148-amino-acid chain: uncharacterized protein (148 aa).

This is an uncharacterized protein from Methanothermobacter thermautotrophicus (Methanobacterium thermoformicicum).